The chain runs to 901 residues: Aconitate hydratase A (901 aa).

Positions 443, 509, and 512 each coordinate [4Fe-4S] cluster.

It belongs to the aconitase/IPM isomerase family. Monomer. [4Fe-4S] cluster is required as a cofactor.

It carries out the reaction citrate = D-threo-isocitrate. The enzyme catalyses (2S,3R)-3-hydroxybutane-1,2,3-tricarboxylate = 2-methyl-cis-aconitate + H2O. It functions in the pathway carbohydrate metabolism; tricarboxylic acid cycle; isocitrate from oxaloacetate: step 2/2. The protein operates within organic acid metabolism; propanoate degradation. In terms of biological role, involved in the catabolism of short chain fatty acids (SCFA) via the tricarboxylic acid (TCA)(acetyl degradation route) and probably the 2-methylcitrate cycle I (propionate degradation route). Catalyzes the reversible isomerization of citrate to isocitrate via cis-aconitate. Could catalyze the hydration of 2-methyl-cis-aconitate to yield (2R,3S)-2-methylisocitrate. The apo form of AcnA functions as a RNA-binding regulatory protein. This chain is Aconitate hydratase A (acnA), found in Staphylococcus aureus (strain COL).